The following is a 183-amino-acid chain: Large ribosomal subunit protein uL6 (183 aa).

This sequence belongs to the universal ribosomal protein uL6 family. In terms of assembly, part of the 50S ribosomal subunit.

Its function is as follows. This protein binds to the 23S rRNA, and is important in its secondary structure. It is located near the subunit interface in the base of the L7/L12 stalk, and near the tRNA binding site of the peptidyltransferase center. This Chlamydia trachomatis serovar A (strain ATCC VR-571B / DSM 19440 / HAR-13) protein is Large ribosomal subunit protein uL6.